A 439-amino-acid chain; its full sequence is Glycosyl hydrolase DigH (439 aa).

The first 27 residues, 1-27, serve as a signal peptide directing secretion; it reads MDICSRNKKLTIRRPAILVALALLLCS. Cys-28 carries the N-palmitoyl cysteine lipid modification. Cys-28 carries the S-diacylglycerol cysteine lipid modification. Positions 34-54 are disordered; the sequence is ESMVTPPAGSKPPATTQQSSQ.

This sequence belongs to the glycosyl hydrolase-like 10 (GHL10) family.

It is found in the cell outer membrane. Its function is as follows. Divisome-localized glycosyl hydrolase that cleaves peptide-free (denuded) peptidoglycans. The polypeptide is Glycosyl hydrolase DigH (Escherichia coli O157:H7).